The following is a 205-amino-acid chain: Small ribosomal subunit protein uS4 (205 aa).

A disordered region spans residues 21–47 (GRPKSPFNKRDYGPGQHGQGRKGKPSD). The S4 RNA-binding domain maps to 94–154 (RRLDSVVYRA…DKSKQLAIID (61 aa)).

It belongs to the universal ribosomal protein uS4 family. Part of the 30S ribosomal subunit. Contacts protein S5. The interaction surface between S4 and S5 is involved in control of translational fidelity.

Its function is as follows. One of the primary rRNA binding proteins, it binds directly to 16S rRNA where it nucleates assembly of the body of the 30S subunit. With S5 and S12 plays an important role in translational accuracy. The polypeptide is Small ribosomal subunit protein uS4 (Pelagibacter ubique (strain HTCC1062)).